Here is a 463-residue protein sequence, read N- to C-terminus: L-seryl-tRNA(Sec) selenium transferase (463 aa).

An N6-(pyridoxal phosphate)lysine modification is found at lysine 295.

This sequence belongs to the SelA family. As to quaternary structure, homodecamer; pentamer of dimers. Binds only one seryl-tRNA(Sec) per dimer. Requires pyridoxal 5'-phosphate as cofactor.

The protein localises to the cytoplasm. It catalyses the reaction L-seryl-tRNA(Sec) + selenophosphate + H(+) = L-selenocysteinyl-tRNA(Sec) + phosphate. It functions in the pathway aminoacyl-tRNA biosynthesis; selenocysteinyl-tRNA(Sec) biosynthesis; selenocysteinyl-tRNA(Sec) from L-seryl-tRNA(Sec) (bacterial route): step 1/1. Its function is as follows. Converts seryl-tRNA(Sec) to selenocysteinyl-tRNA(Sec) required for selenoprotein biosynthesis. This chain is L-seryl-tRNA(Sec) selenium transferase, found in Proteus mirabilis (strain HI4320).